We begin with the raw amino-acid sequence, 299 residues long: Methionyl-tRNA formyltransferase (299 aa).

Residue Ser109–Pro112 coordinates (6S)-5,6,7,8-tetrahydrofolate.

Belongs to the Fmt family.

It catalyses the reaction L-methionyl-tRNA(fMet) + (6R)-10-formyltetrahydrofolate = N-formyl-L-methionyl-tRNA(fMet) + (6S)-5,6,7,8-tetrahydrofolate + H(+). Functionally, attaches a formyl group to the free amino group of methionyl-tRNA(fMet). The formyl group appears to play a dual role in the initiator identity of N-formylmethionyl-tRNA by promoting its recognition by IF2 and preventing the misappropriation of this tRNA by the elongation apparatus. This is Methionyl-tRNA formyltransferase from Wolbachia pipientis subsp. Culex pipiens (strain wPip).